We begin with the raw amino-acid sequence, 391 residues long: MYDVVDLTPTYSPTLKPMLSQQYQTVPPFIIPPNDPNSPSPLSSPSLLSLHQIQMHHQQQLQLLQQQQQQLQQQHQNQVVNQPIQPLQPQPSAFLLNHPNTITTPPLQPMMTPNTIISINSLPPTTTTTTTTTTTTTIPNNNNNITLSPQHHHGQQQHHQHPHLRVDISNNNNSVVDQLPQQQQTNVNNNNNNNNNNNNNNNSNNNNNNNNDFSTPNSFSVPTTPMVAPQMQFPQPPPPLSALNTPNNSTSNPTTPRNERDLLRRLAVANSNNNLNNNLNNLNNNNNNNNNNNNNNNNNNNNNSNNNNINNNNNINNNNNLNNNNLNNNNLPIIQPLNLNNNNNNNNNNNNNNNNNLINPFLNEAIDEQVVPKGSTSPLITSSKKRIKLNV.

Positions 118–149 are enriched in low complexity; that stretch reads SINSLPPTTTTTTTTTTTTTIPNNNNNITLSP. 4 disordered regions span residues 118 to 162, 184 to 258, 272 to 327, and 337 to 356; these read SINS…HQHP, QTNV…TPRN, NNNL…NNLN, and LNLN…NNNN. Residues 150–162 are compositionally biased toward basic residues; it reads QHHHGQQQHHQHP. Low complexity predominate over residues 186–211; that stretch reads NVNNNNNNNNNNNNNNNSNNNNNNNN. A compositionally biased stretch (polar residues) spans 212 to 223; the sequence is DFSTPNSFSVPT. Over residues 244–256 the composition is skewed to low complexity; the sequence is NTPNNSTSNPTTP.

This is an uncharacterized protein from Dictyostelium discoideum (Social amoeba).